The sequence spans 136 residues: uncharacterized protein (136 aa).

This is an uncharacterized protein from Pasteurella multocida (strain Pm70).